Consider the following 179-residue polypeptide: Replication restart protein DnaT (179 aa).

The segment at 151-179 (SRASNGGQPKRDVNSVSEPDSHIPRGFRG) is disordered. Residues 159–173 (PKRDVNSVSEPDSHI) are compositionally biased toward basic and acidic residues.

This sequence belongs to the DnaT family. As to quaternary structure, homooligomerizes. Interacts with PriB. Component of the replication restart primosome. Primosome assembly occurs via a 'hand-off' mechanism. PriA binds to replication forks, subsequently PriB then DnaT bind; DnaT then displaces ssDNA to generate the helicase loading substrate.

Involved in the restart of stalled replication forks, which reloads the replicative helicase on sites other than the origin of replication. Can function in multiple replication restart pathways. Displaces ssDNA from a PriB-ssDNA complex. Probably forms a spiral filament on ssDNA. This is Replication restart protein DnaT from Klebsiella pneumoniae (strain 342).